A 430-amino-acid polypeptide reads, in one-letter code: F-box/kelch-repeat protein At4g33290 (430 aa).

Positions 1–44 constitute an F-box domain; sequence MITDLPKDLIEEILSRVSMTSMRVVRLTCKSWNTLSNSESFKKM. Kelch repeat units follow at residues 161–207, 312–363, and 383–430; these read LLRF…CVQG, VPFI…IIEE, and LVRI…RPTR.

The protein is F-box/kelch-repeat protein At4g33290 of Arabidopsis thaliana (Mouse-ear cress).